The primary structure comprises 130 residues: Histone H2A type 1-C (130 aa).

Residues 1 to 22 (MSGRGKQGGKARAKAKSRSSRA) form a disordered region. The residue at position 2 (Ser-2) is an N-acetylserine. Ser-2 carries the post-translational modification Phosphoserine; by RPS6KA5. Arg-4 carries the citrulline; alternate modification. Arg-4 carries the symmetric dimethylarginine; by PRMT5; alternate modification. Residues Lys-6 and Lys-10 each carry the N6-(2-hydroxyisobutyryl)lysine; alternate modification. At Lys-6 the chain carries N6-acetyllysine; alternate. Basic residues predominate over residues 7–19 (QGGKARAKAKSRS). N6-(beta-hydroxybutyryl)lysine; alternate is present on residues Lys-10 and Lys-14. Position 10 is an N6-lactoyllysine; alternate (Lys-10). An N6-succinyllysine; alternate modification is found at Lys-10. A Glycyl lysine isopeptide (Lys-Gly) (interchain with G-Cter in ubiquitin); alternate cross-link involves residue Lys-14. Lys-16 is covalently cross-linked (Glycyl lysine isopeptide (Lys-Gly) (interchain with G-Cter in ubiquitin)). Lys-37 carries the post-translational modification N6-(2-hydroxyisobutyryl)lysine; alternate. The residue at position 37 (Lys-37) is an N6-(beta-hydroxybutyryl)lysine; alternate. Lys-37 carries the post-translational modification N6-crotonyllysine; alternate. N6-(2-hydroxyisobutyryl)lysine is present on residues Lys-75 and Lys-76. N6-(2-hydroxyisobutyryl)lysine; alternate is present on Lys-96. Position 96 is an N6-(beta-hydroxybutyryl)lysine; alternate (Lys-96). The residue at position 96 (Lys-96) is an N6-succinyllysine; alternate. Lys-96 carries the N6-glutaryllysine; alternate modification. Gln-105 carries the post-translational modification N5-methylglutamine. At Lys-119 the chain carries N6-(2-hydroxyisobutyryl)lysine; alternate. Lys-119 bears the N6-(beta-hydroxybutyryl)lysine; alternate mark. N6-crotonyllysine; alternate is present on residues Lys-119 and Lys-120. Residues Lys-119 and Lys-120 each carry the N6-glutaryllysine; alternate modification. Lys-120 participates in a covalent cross-link: Glycyl lysine isopeptide (Lys-Gly) (interchain with G-Cter in ubiquitin); alternate. The residue at position 121 (Thr-121) is a Phosphothreonine; by DCAF1. N6-crotonyllysine; alternate is present on Lys-126. Residue Lys-126 is modified to N6-glutaryllysine; alternate.

Belongs to the histone H2A family. As to quaternary structure, the nucleosome is a histone octamer containing two molecules each of H2A, H2B, H3 and H4 assembled in one H3-H4 heterotetramer and two H2A-H2B heterodimers. The octamer wraps approximately 147 bp of DNA. Deiminated on Arg-4 in granulocytes upon calcium entry. Post-translationally, monoubiquitination of Lys-120 (H2AK119Ub) by RING1, TRIM37 and RNF2/RING2 complex gives a specific tag for epigenetic transcriptional repression and participates in X chromosome inactivation of female mammals. It is involved in the initiation of both imprinted and random X inactivation. Ubiquitinated H2A is enriched in inactive X chromosome chromatin. Ubiquitination of H2A functions downstream of methylation of 'Lys-27' of histone H3 (H3K27me). H2AK119Ub by RNF2/RING2 can also be induced by ultraviolet and may be involved in DNA repair. Monoubiquitination of Lys-120 (H2AK119Ub) by TRIM37 may promote transformation of cells in a number of breast cancers. Following DNA double-strand breaks (DSBs), it is ubiquitinated through 'Lys-63' linkage of ubiquitin moieties by the E2 ligase UBE2N and the E3 ligases RNF8 and RNF168, leading to the recruitment of repair proteins to sites of DNA damage. Ubiquitination at Lys-14 and Lys-16 (H2AK13Ub and H2AK15Ub, respectively) in response to DNA damage is initiated by RNF168 that mediates monoubiquitination at these 2 sites, and 'Lys-63'-linked ubiquitin are then conjugated to monoubiquitin; RNF8 is able to extend 'Lys-63'-linked ubiquitin chains in vitro. Deubiquitinated by USP51 at Lys-14 and Lys-16 (H2AK13Ub and H2AK15Ub, respectively) after damaged DNA is repaired. H2AK119Ub and ionizing radiation-induced 'Lys-63'-linked ubiquitination (H2AK13Ub and H2AK15Ub) are distinct events. In terms of processing, phosphorylation on Ser-2 (H2AS1ph) is enhanced during mitosis. Phosphorylation on Ser-2 by RPS6KA5/MSK1 directly represses transcription. Acetylation of H3 inhibits Ser-2 phosphorylation by RPS6KA5/MSK1. Phosphorylation at Thr-121 (H2AT120ph) by DCAF1 is present in the regulatory region of many tumor suppresor genes and down-regulates their transcription. Glutamine methylation at Gln-105 (H2AQ104me) by FBL is specifically dedicated to polymerase I. It is present at 35S ribosomal DNA locus and impairs binding of the FACT complex. Post-translationally, symmetric dimethylation on Arg-4 by the PRDM1/PRMT5 complex may play a crucial role in the germ-cell lineage. In terms of processing, crotonylation (Kcr) is specifically present in male germ cells and marks testis-specific genes in post-meiotic cells, including X-linked genes that escape sex chromosome inactivation in haploid cells. Crotonylation marks active promoters and enhancers and confers resistance to transcriptional repressors. It is also associated with post-meiotically activated genes on autosomes. Lactylated in macrophages by EP300/P300 by using lactoyl-CoA directly derived from endogenous or exogenous lactate, leading to stimulates gene transcription.

The protein resides in the nucleus. The protein localises to the chromosome. In terms of biological role, core component of nucleosome. Nucleosomes wrap and compact DNA into chromatin, limiting DNA accessibility to the cellular machineries which require DNA as a template. Histones thereby play a central role in transcription regulation, DNA repair, DNA replication and chromosomal stability. DNA accessibility is regulated via a complex set of post-translational modifications of histones, also called histone code, and nucleosome remodeling. The polypeptide is Histone H2A type 1-C (Homo sapiens (Human)).